Consider the following 469-residue polypeptide: Glutamate--tRNA ligase (469 aa).

The 'HIGH' region signature appears at 11 to 21; it reads PSPTGFIHLGN. The short motif at 243 to 247 is the 'KMSKS' region element; the sequence is KMSKR. Lys-246 is a binding site for ATP.

Belongs to the class-I aminoacyl-tRNA synthetase family. Glutamate--tRNA ligase type 1 subfamily. Monomer.

It is found in the cytoplasm. It carries out the reaction tRNA(Glu) + L-glutamate + ATP = L-glutamyl-tRNA(Glu) + AMP + diphosphate. Its function is as follows. Catalyzes the attachment of glutamate to tRNA(Glu) in a two-step reaction: glutamate is first activated by ATP to form Glu-AMP and then transferred to the acceptor end of tRNA(Glu). In Burkholderia lata (strain ATCC 17760 / DSM 23089 / LMG 22485 / NCIMB 9086 / R18194 / 383), this protein is Glutamate--tRNA ligase.